The following is a 451-amino-acid chain: Probable asparagine--tRNA ligase, cytoplasmic (451 aa).

Belongs to the class-II aminoacyl-tRNA synthetase family.

The protein resides in the cytoplasm. The catalysed reaction is tRNA(Asn) + L-asparagine + ATP = L-asparaginyl-tRNA(Asn) + AMP + diphosphate + H(+). This Encephalitozoon cuniculi (strain GB-M1) (Microsporidian parasite) protein is Probable asparagine--tRNA ligase, cytoplasmic.